The following is a 336-amino-acid chain: Glyceraldehyde-3-phosphate dehydrogenase (336 aa).

NAD(+) contacts are provided by residues arginine 12–isoleucine 13, aspartate 34, arginine 78, and threonine 121. Residues serine 151–threonine 153, threonine 182, arginine 199, threonine 212–glycine 213, and arginine 235 contribute to the D-glyceraldehyde 3-phosphate site. The active-site Nucleophile is the cysteine 152. Position 316 (asparagine 316) interacts with NAD(+).

This sequence belongs to the glyceraldehyde-3-phosphate dehydrogenase family. As to quaternary structure, homotetramer.

It is found in the cytoplasm. It catalyses the reaction D-glyceraldehyde 3-phosphate + phosphate + NAD(+) = (2R)-3-phospho-glyceroyl phosphate + NADH + H(+). It participates in carbohydrate degradation; glycolysis; pyruvate from D-glyceraldehyde 3-phosphate: step 1/5. Catalyzes the oxidative phosphorylation of glyceraldehyde 3-phosphate (G3P) to 1,3-bisphosphoglycerate (BPG) using the cofactor NAD. The first reaction step involves the formation of a hemiacetal intermediate between G3P and a cysteine residue, and this hemiacetal intermediate is then oxidized to a thioester, with concomitant reduction of NAD to NADH. The reduced NADH is then exchanged with the second NAD, and the thioester is attacked by a nucleophilic inorganic phosphate to produce BPG. This chain is Glyceraldehyde-3-phosphate dehydrogenase (gap), found in Streptococcus pyogenes serotype M3 (strain ATCC BAA-595 / MGAS315).